The sequence spans 102 residues: Large ribosomal subunit protein bL21 (102 aa).

This sequence belongs to the bacterial ribosomal protein bL21 family. Part of the 50S ribosomal subunit. Contacts protein L20.

In terms of biological role, this protein binds to 23S rRNA in the presence of protein L20. In Lachnoclostridium phytofermentans (strain ATCC 700394 / DSM 18823 / ISDg) (Clostridium phytofermentans), this protein is Large ribosomal subunit protein bL21.